The following is a 453-amino-acid chain: Maltotriose-binding protein (453 aa).

Positions 1-29 are cleaved as a signal peptide; that stretch reads MKRGIYAVLLVGVLIFSVVASGCIGGTQT. The segment covering 27–65 has biased composition (low complexity); it reads TQTQTETQTPEKTQTPTTTQPSPTTTTSPTQTTSQTPTE. The segment at 27-73 is disordered; it reads TQTQTETQTPEKTQTPTTTQPSPTTTTSPTQTTSQTPTETETHTQEA.

The protein belongs to the bacterial solute-binding protein 1 family.

In terms of biological role, involved in an abc transport system for maltotriose. The protein is Maltotriose-binding protein (malE) of Pyrococcus abyssi (strain GE5 / Orsay).